The primary structure comprises 314 residues: DNA-directed RNA polymerase subunit alpha (314 aa).

The segment at 1-227 (MIEFQKPTIS…EHLALFIDLS (227 aa)) is alpha N-terminal domain (alpha-NTD). The segment at 241 to 314 (VETVMENKEP…GQSFKQETEN (74 aa)) is alpha C-terminal domain (alpha-CTD).

Belongs to the RNA polymerase alpha chain family. In terms of assembly, homodimer. The RNAP catalytic core consists of 2 alpha, 1 beta, 1 beta' and 1 omega subunit. When a sigma factor is associated with the core the holoenzyme is formed, which can initiate transcription.

It catalyses the reaction RNA(n) + a ribonucleoside 5'-triphosphate = RNA(n+1) + diphosphate. DNA-dependent RNA polymerase catalyzes the transcription of DNA into RNA using the four ribonucleoside triphosphates as substrates. This chain is DNA-directed RNA polymerase subunit alpha, found in Oenococcus oeni (strain ATCC BAA-331 / PSU-1).